The following is a 301-amino-acid chain: Probable alpha-L-glutamate ligase 1 (301 aa).

The ATP-grasp domain maps to 104 to 287 (MQLMSRRGIG…VAGAIIDFVE (184 aa)). Residues K141, 178 to 179 (EY), D187, and 211 to 213 (RSN) contribute to the ATP site. Mg(2+)-binding residues include D248, E260, and N262. Residues D248, E260, and N262 each coordinate Mn(2+).

This sequence belongs to the RimK family. It depends on Mg(2+) as a cofactor. Mn(2+) is required as a cofactor.

The chain is Probable alpha-L-glutamate ligase 1 from Shewanella baltica (strain OS185).